We begin with the raw amino-acid sequence, 566 residues long: Endoglucanase G (566 aa).

The first 30 residues, 1 to 30 (MKKAKAIFSLVVALMVLAIFCFAQNTGSTA), serve as a signal peptide directing secretion. E226 (proton donor) is an active-site residue. E381 acts as the Nucleophile in catalysis. Residues 473 to 494 (GTPQASDPPATPTATPTKPAAS) are disordered. Residues 474 to 494 (TPQASDPPATPTATPTKPAAS) show a composition bias toward low complexity. In terms of domain architecture, Dockerin spans 497-564 (PSFIYGDINS…LLRSIDKLPH (68 aa)).

Belongs to the glycosyl hydrolase 5 (cellulase A) family.

It carries out the reaction Endohydrolysis of (1-&gt;4)-beta-D-glucosidic linkages in cellulose, lichenin and cereal beta-D-glucans.. Its function is as follows. This enzyme catalyzes the endohydrolysis of 1,4-beta-glucosidic linkages in cellulose, lichenin and cereal beta-D-glucans. The protein is Endoglucanase G (celG) of Acetivibrio thermocellus (strain ATCC 27405 / DSM 1237 / JCM 9322 / NBRC 103400 / NCIMB 10682 / NRRL B-4536 / VPI 7372) (Clostridium thermocellum).